Consider the following 114-residue polypeptide: Large ribosomal subunit protein uL22 (114 aa).

This sequence belongs to the universal ribosomal protein uL22 family. As to quaternary structure, part of the 50S ribosomal subunit.

Functionally, this protein binds specifically to 23S rRNA; its binding is stimulated by other ribosomal proteins, e.g. L4, L17, and L20. It is important during the early stages of 50S assembly. It makes multiple contacts with different domains of the 23S rRNA in the assembled 50S subunit and ribosome. The globular domain of the protein is located near the polypeptide exit tunnel on the outside of the subunit, while an extended beta-hairpin is found that lines the wall of the exit tunnel in the center of the 70S ribosome. The sequence is that of Large ribosomal subunit protein uL22 from Streptococcus suis (strain 98HAH33).